Reading from the N-terminus, the 435-residue chain is GPI-anchor transamidase component PIGU (435 aa).

Over 1–3 (MAA) the chain is Cytoplasmic. The helical transmembrane segment at 4-22 (PLALVLVVAVTVRAALFRS) threads the bilayer. The Lumenal segment spans residues 23–78 (SLAEFISERVEVVSPLSSWKRVVEGLSLLDLGVSPYSGAVFHETPLIIYLFHFLID). Residues 79–99 (YAELVFMITDALTAIALYFAI) form a helical membrane-spanning segment. Residues 100-136 (QDFNKVVFKKQKLLLELDQYAPDVAELIRTPMEMRYI) are Cytoplasmic-facing. 4 helical membrane passes run 137-158 (PLKV…VAKS), 159-178 (TCAI…IKGS), 179-194 (VFLS…YQTL), and 195-205 (YPVTLFAPGLL). Over 206-222 (YLLQRQYIPVKVKSKAF) the chain is Cytoplasmic. Lys-216 is an a cardiolipin binding site. The chain crosses the membrane as a helical span at residues 223–244 (WIFSWEYAMMYIGSLVVIVCLS). Over 245-286 (FFLLSSWDFIPAVYGFILSVPDLTPNIGLFWYFFAEMFEHFS) the chain is Lumenal. The helical transmembrane segment at 287-306 (LFFVCVFQINVFFYTVPLAI) threads the bilayer. The Cytoplasmic portion of the chain corresponds to 307-311 (KLKEH). A cardiolipin is bound at residue Lys-309. Helical transmembrane passes span 312-331 (PIFF…SYPT) and 332-345 (VGDV…FPVW). Residues 346 to 354 (NHLYRFLRN) lie on the Cytoplasmic side of the membrane. The helical transmembrane segment at 355–372 (VFVLTCIIVVCSLLFPVL) threads the bilayer. Topologically, residues 373 to 384 (WHLWIYAGSANS) are lumenal. 2 residues coordinate a 2-acyl-6-[6-phosphoethanolamine-alpha-D-mannosyl-(1-&gt;2)-6-phosphoethanolamine-alpha-D-mannosyl-(1-&gt;6)-2-phosphoethanolamine-alpha-D-mannosyl-(1-&gt;4)-alpha-D-glucosaminyl]-1-(1-radyl,2-acyl-sn-glycero-3-phospho)-1D-myo-inositol: Asn-383 and Asn-385. The chain crosses the membrane as a helical span at residues 385-406 (NFFYAITLTFNVGQILLISDYF). The Cytoplasmic segment spans residues 407–435 (YAFLRREYYLTHGLYLTAKDGTEAMLVLK).

Belongs to the PIGU family. In terms of assembly, heteropentamer. Part of the GPI-anchor transamidase complex, consisting of PIGK, PIGT, PIGS, PIGU and GAA1.

The protein resides in the endoplasmic reticulum membrane. The protein operates within glycolipid biosynthesis; glycosylphosphatidylinositol-anchor biosynthesis. Component of the glycosylphosphatidylinositol-anchor (GPI-anchor) transamidase (GPI-T) complex that catalyzes the formation of the linkage between a proprotein and a GPI-anchor and participates in GPI anchored protein biosynthesis. Binds the lipid portion of GPI-anchor. May act as an organizer in the transmembrane layer to recruit other subunits, and thus is essential for assembly of the complex. This is GPI-anchor transamidase component PIGU from Cricetulus griseus (Chinese hamster).